The sequence spans 62 residues: MKYAEISSLAIEELKEKIKIEQENLRKLKFAHTISPIENPTKIKNTRRLIARLETALNVKGS.

Belongs to the universal ribosomal protein uL29 family.

The sequence is that of Large ribosomal subunit protein uL29 from Amoebophilus asiaticus (strain 5a2).